The primary structure comprises 76 residues: Sec-independent protein translocase protein TatA (76 aa).

Residues 1-21 (MLGGLTGWHLLIILAVILLLF) form a helical membrane-spanning segment. Residues 44-57 (VNEMKKDGDKDKGE) show a composition bias toward basic and acidic residues. A disordered region spans residues 44 to 76 (VNEMKKDGDKDKGEGGSTAPATDTGASSEQNSK). Positions 62–76 (APATDTGASSEQNSK) are enriched in polar residues.

The protein belongs to the TatA/E family. The Tat system comprises two distinct complexes: a TatABC complex, containing multiple copies of TatA, TatB and TatC subunits, and a separate TatA complex, containing only TatA subunits. Substrates initially bind to the TatABC complex, which probably triggers association of the separate TatA complex to form the active translocon.

Its subcellular location is the cell membrane. Part of the twin-arginine translocation (Tat) system that transports large folded proteins containing a characteristic twin-arginine motif in their signal peptide across membranes. TatA could form the protein-conducting channel of the Tat system. The protein is Sec-independent protein translocase protein TatA of Leifsonia xyli subsp. xyli (strain CTCB07).